The following is a 510-amino-acid chain: MANCENNPWKKNAWGKNEETAEEPIVSFADVLSEEFIEDLSVQEKLEEERYMKQLDQMFGDTSVSDDQLPINTEGMTDEEVALALQRHFDREADVARAVGSSSSVHFTPDRYHPKTMQETDSENEDDDALRQAATDMLYAKLDEENATNSRLRPEGPSTSRTKHDTGVSGRRNADKTFNDRNTLPTGDMVGDKLNNKVFNKLMAFGKSESKRQMRNKDKEEKATMDTSVDSDTRLLLLKWINQGVFDSVDGIIATGKESAVLHAAQDSATSYAIKVYKTTLSEFKNRSEYVKDDFRFKNPRGVLKIWAEREFMNLSRMAKHGLPCPQPVKVRRNVLVMSFLGDQGLAAPRLKNVEWEFFTDDERRNVYDQVQSIMCRMYKECLLVHADLSEFNLLLTPDNKVHVIDVSQAMDLSHPRSLQFLTRDIQNIITFFTRIGTPNLPTYVQLFNLITDLDMVEDHDLLVQVEQFSEENRSVDLRHDKSRPADMELKKYNEEKKANRGISPAREYN.

Disordered stretches follow at residues 100–126 (GSSS…ENED) and 143–191 (DEEN…DMVG). Composition is skewed to basic and acidic residues over residues 108–118 (TPDRYHPKTMQ) and 162–179 (TKHD…KTFN). The 276-residue stretch at 235–510 (LLLLKWINQG…RGISPAREYN (276 aa)) folds into the Protein kinase domain. Residues 241 to 249 (INQGVFDSV) and lysine 275 contribute to the ATP site. Catalysis depends on aspartate 388, which acts as the Proton acceptor. A compositionally biased stretch (basic and acidic residues) spans 474–499 (RSVDLRHDKSRPADMELKKYNEEKKA). A disordered region spans residues 474-510 (RSVDLRHDKSRPADMELKKYNEEKKANRGISPAREYN).

Belongs to the protein kinase superfamily. RIO-type Ser/Thr kinase family. Requires Mg(2+) as cofactor. Expressed in tail neurons (PVQ and PHAL/PQR).

It catalyses the reaction L-seryl-[protein] + ATP = O-phospho-L-seryl-[protein] + ADP + H(+). It carries out the reaction L-threonyl-[protein] + ATP = O-phospho-L-threonyl-[protein] + ADP + H(+). In Caenorhabditis elegans, this protein is Serine/threonine-protein kinase RIO3 (riok-3).